Consider the following 348-residue polypeptide: Lipoyl synthase (348 aa).

The segment at 1–45 (MSESAKPRITSGSKFRNEHGFSAIKDGVKRSSSNTEGKSLERKPK) is disordered. Cys-73, Cys-78, Cys-84, Cys-99, Cys-103, Cys-106, and Ser-314 together coordinate [4Fe-4S] cluster. The region spanning 85 to 303 (WTNGTATIMV…RDIGLEKGFM (219 aa)) is the Radical SAM core domain.

This sequence belongs to the radical SAM superfamily. Lipoyl synthase family. [4Fe-4S] cluster is required as a cofactor.

The protein resides in the cytoplasm. It catalyses the reaction [[Fe-S] cluster scaffold protein carrying a second [4Fe-4S](2+) cluster] + N(6)-octanoyl-L-lysyl-[protein] + 2 oxidized [2Fe-2S]-[ferredoxin] + 2 S-adenosyl-L-methionine + 4 H(+) = [[Fe-S] cluster scaffold protein] + N(6)-[(R)-dihydrolipoyl]-L-lysyl-[protein] + 4 Fe(3+) + 2 hydrogen sulfide + 2 5'-deoxyadenosine + 2 L-methionine + 2 reduced [2Fe-2S]-[ferredoxin]. The protein operates within protein modification; protein lipoylation via endogenous pathway; protein N(6)-(lipoyl)lysine from octanoyl-[acyl-carrier-protein]: step 2/2. Functionally, catalyzes the radical-mediated insertion of two sulfur atoms into the C-6 and C-8 positions of the octanoyl moiety bound to the lipoyl domains of lipoate-dependent enzymes, thereby converting the octanoylated domains into lipoylated derivatives. The polypeptide is Lipoyl synthase (Marinobacter nauticus (strain ATCC 700491 / DSM 11845 / VT8) (Marinobacter aquaeolei)).